Consider the following 593-residue polypeptide: Autophagy-related protein 22-2 (593 aa).

The helical transmembrane segment at 42 to 62 threads the bilayer; it reads YGVAAEVFAVCGVGSFLPLTL. An N-linked (GlcNAc...) asparagine glycan is attached at asparagine 90. 3 consecutive transmembrane segments (helical) span residues 112–132, 159–179, and 181–201; these read SFAM…LVSF, LFML…VIGV, and CLGS…ANDP. The segment at 228-261 is disordered; the sequence is SWTDEEDTGDHAGPAGSKKAVEPEKASSSTSPEL. 4 helical membrane passes run 271–291, 305–325, 377–397, and 415–435; these read GVGL…LLLF, LPLR…TVVC, VVVF…VSGT, and LLSI…PIVA. N-linked (GlcNAc...) asparagine glycosylation is present at asparagine 443. Transmembrane regions (helical) follow at residues 448-468, 480-500, 525-545, and 548-568; these read LCIA…IPFI, WEIF…ASYC, KGSS…TGSV, and GFIF…LVNA.

Belongs to the ATG22 family.

The protein localises to the vacuole membrane. Its function is as follows. Vacuolar effluxer which mediate the efflux of amino acids resulting from autophagic degradation. The release of autophagic amino acids allows the maintenance of protein synthesis and viability during nitrogen starvation. This chain is Autophagy-related protein 22-2 (atg22-2), found in Emericella nidulans (strain FGSC A4 / ATCC 38163 / CBS 112.46 / NRRL 194 / M139) (Aspergillus nidulans).